The following is a 64-amino-acid chain: Alpha-conotoxin CnIA (64 aa).

An N-terminal signal peptide occupies residues 1 to 21; that stretch reads MGMRMMFTVFLLVVLTTTVVS. The propeptide occupies 22 to 47; it reads FPSDSASDGRDDEAKDERSDIYESKR. 2 cysteine pairs are disulfide-bonded: C51–C56 and C52–C62. 4-hydroxyproline; in CnIK; partial is present on P54. The residue at position 62 (C62) is a Cysteine amide.

This sequence belongs to the conotoxin A superfamily. In terms of tissue distribution, expressed by the venom duct.

It is found in the secreted. In terms of biological role, alpha-conotoxins act on postsynaptic membranes, they bind to the nicotinic acetylcholine receptors (nAChR) and thus inhibit them. CnIA and CnIB block muscular nAChR alpha-1/gamma and alpha-1/delta subunits. The protein is Alpha-conotoxin CnIA of Conus consors (Singed cone).